We begin with the raw amino-acid sequence, 411 residues long: Phosphopentomutase (411 aa).

Residues Asp-14, Asp-306, His-311, Asp-347, His-348, and His-359 each contribute to the Mn(2+) site.

This sequence belongs to the phosphopentomutase family. Mn(2+) is required as a cofactor.

The protein resides in the cytoplasm. The enzyme catalyses 2-deoxy-alpha-D-ribose 1-phosphate = 2-deoxy-D-ribose 5-phosphate. It catalyses the reaction alpha-D-ribose 1-phosphate = D-ribose 5-phosphate. The protein operates within carbohydrate degradation; 2-deoxy-D-ribose 1-phosphate degradation; D-glyceraldehyde 3-phosphate and acetaldehyde from 2-deoxy-alpha-D-ribose 1-phosphate: step 1/2. Functionally, isomerase that catalyzes the conversion of deoxy-ribose 1-phosphate (dRib-1-P) and ribose 1-phosphate (Rib-1-P) to deoxy-ribose 5-phosphate (dRib-5-P) and ribose 5-phosphate (Rib-5-P), respectively. In Lactococcus lactis subsp. cremoris (strain SK11), this protein is Phosphopentomutase.